The primary structure comprises 438 residues: Adenylosuccinate synthetase (438 aa).

GTP is bound by residues 13 to 19 and 41 to 43; these read GDEGKGK and GHT. Aspartate 14 functions as the Proton acceptor in the catalytic mechanism. Residues aspartate 14 and glycine 41 each coordinate Mg(2+). Residues 14-17, 39-42, threonine 130, arginine 144, glutamine 225, threonine 240, and arginine 310 contribute to the IMP site; these read DEGK and NAGH. Histidine 42 functions as the Proton donor in the catalytic mechanism. Residue 306–312 participates in substrate binding; that stretch reads ATTGRLR. Residues arginine 312, 338–340, and 421–423 contribute to the GTP site; these read KLD and STG.

It belongs to the adenylosuccinate synthetase family. In terms of assembly, homodimer. Requires Mg(2+) as cofactor.

Its subcellular location is the cytoplasm. The catalysed reaction is IMP + L-aspartate + GTP = N(6)-(1,2-dicarboxyethyl)-AMP + GDP + phosphate + 2 H(+). It participates in purine metabolism; AMP biosynthesis via de novo pathway; AMP from IMP: step 1/2. Plays an important role in the de novo pathway of purine nucleotide biosynthesis. Catalyzes the first committed step in the biosynthesis of AMP from IMP. The chain is Adenylosuccinate synthetase from Aliivibrio fischeri (strain ATCC 700601 / ES114) (Vibrio fischeri).